The following is a 155-amino-acid chain: Endoribonuclease YbeY (155 aa).

3 residues coordinate Zn(2+): His120, His124, and His130.

It belongs to the endoribonuclease YbeY family. The cofactor is Zn(2+).

It is found in the cytoplasm. Single strand-specific metallo-endoribonuclease involved in late-stage 70S ribosome quality control and in maturation of the 3' terminus of the 16S rRNA. The sequence is that of Endoribonuclease YbeY from Staphylococcus epidermidis (strain ATCC 35984 / DSM 28319 / BCRC 17069 / CCUG 31568 / BM 3577 / RP62A).